The sequence spans 85 residues: Small ribosomal subunit protein uS17 (85 aa).

The protein belongs to the universal ribosomal protein uS17 family. Part of the 30S ribosomal subunit.

In terms of biological role, one of the primary rRNA binding proteins, it binds specifically to the 5'-end of 16S ribosomal RNA. The chain is Small ribosomal subunit protein uS17 from Trichlorobacter lovleyi (strain ATCC BAA-1151 / DSM 17278 / SZ) (Geobacter lovleyi).